Here is a 70-residue protein sequence, read N- to C-terminus: Large ribosomal subunit protein bL31 (70 aa).

Positions 16, 18, 37, and 40 each coordinate Zn(2+).

It belongs to the bacterial ribosomal protein bL31 family. Type A subfamily. As to quaternary structure, part of the 50S ribosomal subunit. Requires Zn(2+) as cofactor.

Binds the 23S rRNA. In Shewanella sp. (strain MR-4), this protein is Large ribosomal subunit protein bL31.